The primary structure comprises 98 residues: UPF0235 protein Asuc_1977 (98 aa).

The protein belongs to the UPF0235 family.

This chain is UPF0235 protein Asuc_1977, found in Actinobacillus succinogenes (strain ATCC 55618 / DSM 22257 / CCUG 43843 / 130Z).